We begin with the raw amino-acid sequence, 262 residues long: Adenosylcobinamide-GDP ribazoletransferase (262 aa).

The next 5 helical transmembrane spans lie at 41-61 (AFPL…FILG), 65-85 (ASSL…TGAL), 115-132 (IGTY…LRVS), 134-156 (LAAF…TAAL), and 195-215 (GVLL…AVWL).

The protein belongs to the CobS family. Mg(2+) serves as cofactor.

It is found in the cell inner membrane. The enzyme catalyses alpha-ribazole + adenosylcob(III)inamide-GDP = adenosylcob(III)alamin + GMP + H(+). It catalyses the reaction alpha-ribazole 5'-phosphate + adenosylcob(III)inamide-GDP = adenosylcob(III)alamin 5'-phosphate + GMP + H(+). Its pathway is cofactor biosynthesis; adenosylcobalamin biosynthesis; adenosylcobalamin from cob(II)yrinate a,c-diamide: step 7/7. Functionally, joins adenosylcobinamide-GDP and alpha-ribazole to generate adenosylcobalamin (Ado-cobalamin). Also synthesizes adenosylcobalamin 5'-phosphate from adenosylcobinamide-GDP and alpha-ribazole 5'-phosphate. This Rhizobium meliloti (strain 1021) (Ensifer meliloti) protein is Adenosylcobinamide-GDP ribazoletransferase.